Consider the following 197-residue polypeptide: Ribonuclease HII (197 aa).

The RNase H type-2 domain occupies 4–197; that stretch reads IWVCGVDEAG…VRKALESVAS (194 aa). A divalent metal cation contacts are provided by Asp-10, Glu-11, and Asp-106.

The protein belongs to the RNase HII family. Mn(2+) serves as cofactor. Mg(2+) is required as a cofactor.

It localises to the cytoplasm. It carries out the reaction Endonucleolytic cleavage to 5'-phosphomonoester.. Functionally, endonuclease that specifically degrades the RNA of RNA-DNA hybrids. The sequence is that of Ribonuclease HII from Polynucleobacter necessarius subsp. necessarius (strain STIR1).